A 540-amino-acid polypeptide reads, in one-letter code: Glucose-6-phosphate isomerase (540 aa).

Catalysis depends on glutamate 350, which acts as the Proton donor. Residues histidine 381 and lysine 503 contribute to the active site.

The protein belongs to the GPI family.

It localises to the cytoplasm. It carries out the reaction alpha-D-glucose 6-phosphate = beta-D-fructose 6-phosphate. Its pathway is carbohydrate biosynthesis; gluconeogenesis. The protein operates within carbohydrate degradation; glycolysis; D-glyceraldehyde 3-phosphate and glycerone phosphate from D-glucose: step 2/4. In terms of biological role, catalyzes the reversible isomerization of glucose-6-phosphate to fructose-6-phosphate. This is Glucose-6-phosphate isomerase from Burkholderia ambifaria (strain MC40-6).